Reading from the N-terminus, the 288-residue chain is Urease accessory protein UreD (288 aa).

Belongs to the UreD family. As to quaternary structure, ureD, UreF and UreG form a complex that acts as a GTP-hydrolysis-dependent molecular chaperone, activating the urease apoprotein by helping to assemble the nickel containing metallocenter of UreC. The UreE protein probably delivers the nickel.

It localises to the cytoplasm. In terms of biological role, required for maturation of urease via the functional incorporation of the urease nickel metallocenter. In Dechloromonas aromatica (strain RCB), this protein is Urease accessory protein UreD.